Here is a 454-residue protein sequence, read N- to C-terminus: Pup--protein ligase (454 aa).

E9 is a binding site for Mg(2+). R53 is a binding site for ATP. Residue Y55 coordinates Mg(2+). The Proton acceptor role is filled by D57. E63 provides a ligand contact to Mg(2+). Residues T66 and W420 each contribute to the ATP site.

Belongs to the Pup ligase/Pup deamidase family. Pup-conjugating enzyme subfamily.

It catalyses the reaction ATP + [prokaryotic ubiquitin-like protein]-L-glutamate + [protein]-L-lysine = ADP + phosphate + N(6)-([prokaryotic ubiquitin-like protein]-gamma-L-glutamyl)-[protein]-L-lysine.. It participates in protein degradation; proteasomal Pup-dependent pathway. It functions in the pathway protein modification; protein pupylation. Catalyzes the covalent attachment of the prokaryotic ubiquitin-like protein modifier Pup to the proteasomal substrate proteins, thereby targeting them for proteasomal degradation. This tagging system is termed pupylation. The ligation reaction involves the side-chain carboxylate of the C-terminal glutamate of Pup and the side-chain amino group of a substrate lysine. This Paenarthrobacter aurescens (strain TC1) protein is Pup--protein ligase.